The sequence spans 547 residues: Chaperonin GroEL 1 (547 aa).

Residues 30-33 (TLGP), lysine 51, 87-91 (DGTTT), glycine 415, 479-481 (NAA), and aspartate 495 each bind ATP. Positions 525–547 (PKKKGAPAGGGMGGMGGMDEMDY) are disordered. Residues 531–541 (PAGGGMGGMGG) show a composition bias toward gly residues.

Belongs to the chaperonin (HSP60) family. As to quaternary structure, forms a cylinder of 14 subunits composed of two heptameric rings stacked back-to-back. Interacts with the co-chaperonin GroES.

It is found in the cytoplasm. The catalysed reaction is ATP + H2O + a folded polypeptide = ADP + phosphate + an unfolded polypeptide.. Together with its co-chaperonin GroES, plays an essential role in assisting protein folding. The GroEL-GroES system forms a nano-cage that allows encapsulation of the non-native substrate proteins and provides a physical environment optimized to promote and accelerate protein folding. The sequence is that of Chaperonin GroEL 1 from Anaeromyxobacter sp. (strain Fw109-5).